We begin with the raw amino-acid sequence, 490 residues long: ATP synthase subunit alpha 1 (490 aa).

Residue 171–178 (GDNGLGKS) participates in ATP binding.

This sequence belongs to the ATPase alpha/beta chains family. As to quaternary structure, F-type ATPases have 2 components, CF(1) - the catalytic core - and CF(0) - the membrane proton channel. CF(1) has five subunits: alpha(3), beta(3), gamma(1), delta(1), epsilon(1). CF(0) has three main subunits: a(1), b(2) and c(9-12). The alpha and beta chains form an alternating ring which encloses part of the gamma chain. CF(1) is attached to CF(0) by a central stalk formed by the gamma and epsilon chains, while a peripheral stalk is formed by the delta and b chains.

It is found in the cell inner membrane. It carries out the reaction ATP + H2O + 4 H(+)(in) = ADP + phosphate + 5 H(+)(out). Its function is as follows. Produces ATP from ADP in the presence of a proton gradient across the membrane. The alpha chain is a regulatory subunit. In Legionella pneumophila (strain Corby), this protein is ATP synthase subunit alpha 1.